The chain runs to 602 residues: Aspartate--tRNA(Asp/Asn) ligase (602 aa).

L-aspartate is bound at residue E175. The tract at residues 199–202 is aspartate; the sequence is QIFK. R221 contacts L-aspartate. ATP is bound by residues 221–223 and Q230; that span reads RDE. An L-aspartate-binding site is contributed by H458. ATP is bound at residue E492. Residue R499 participates in L-aspartate binding. Residue 544–547 participates in ATP binding; that stretch reads GLDR.

The protein belongs to the class-II aminoacyl-tRNA synthetase family. Type 1 subfamily. As to quaternary structure, homodimer.

The protein resides in the cytoplasm. The catalysed reaction is tRNA(Asx) + L-aspartate + ATP = L-aspartyl-tRNA(Asx) + AMP + diphosphate. Aspartyl-tRNA synthetase with relaxed tRNA specificity since it is able to aspartylate not only its cognate tRNA(Asp) but also tRNA(Asn). Reaction proceeds in two steps: L-aspartate is first activated by ATP to form Asp-AMP and then transferred to the acceptor end of tRNA(Asp/Asn). The sequence is that of Aspartate--tRNA(Asp/Asn) ligase from Cupriavidus necator (strain ATCC 17699 / DSM 428 / KCTC 22496 / NCIMB 10442 / H16 / Stanier 337) (Ralstonia eutropha).